The primary structure comprises 384 residues: UDP-N-acetylglucosamine--N-acetylmuramyl-(pentapeptide) pyrophosphoryl-undecaprenol N-acetylglucosamine transferase (384 aa).

UDP-N-acetyl-alpha-D-glucosamine is bound by residues 17–19 (TGG), Asn-131, Arg-172, Ser-200, and Gln-301.

Belongs to the glycosyltransferase 28 family. MurG subfamily.

The protein resides in the cell inner membrane. The enzyme catalyses di-trans,octa-cis-undecaprenyl diphospho-N-acetyl-alpha-D-muramoyl-L-alanyl-D-glutamyl-meso-2,6-diaminopimeloyl-D-alanyl-D-alanine + UDP-N-acetyl-alpha-D-glucosamine = di-trans,octa-cis-undecaprenyl diphospho-[N-acetyl-alpha-D-glucosaminyl-(1-&gt;4)]-N-acetyl-alpha-D-muramoyl-L-alanyl-D-glutamyl-meso-2,6-diaminopimeloyl-D-alanyl-D-alanine + UDP + H(+). Its pathway is cell wall biogenesis; peptidoglycan biosynthesis. Its function is as follows. Cell wall formation. Catalyzes the transfer of a GlcNAc subunit on undecaprenyl-pyrophosphoryl-MurNAc-pentapeptide (lipid intermediate I) to form undecaprenyl-pyrophosphoryl-MurNAc-(pentapeptide)GlcNAc (lipid intermediate II). This Granulibacter bethesdensis (strain ATCC BAA-1260 / CGDNIH1) protein is UDP-N-acetylglucosamine--N-acetylmuramyl-(pentapeptide) pyrophosphoryl-undecaprenol N-acetylglucosamine transferase.